A 230-amino-acid polypeptide reads, in one-letter code: Potassium/proton antiporter CemA (230 aa).

4 helical membrane passes run 7 to 27 (LPSF…SFSF), 106 to 126 (IILH…SFFL), 145 to 165 (LNDS…VGFH), and 181 to 201 (LGWV…PVIL).

The protein belongs to the CemA family.

The protein localises to the plastid. It localises to the chloroplast inner membrane. The enzyme catalyses K(+)(in) + H(+)(out) = K(+)(out) + H(+)(in). In terms of biological role, contributes to K(+)/H(+) antiport activity by supporting proton efflux to control proton extrusion and homeostasis in chloroplasts in a light-dependent manner to modulate photosynthesis. Prevents excessive induction of non-photochemical quenching (NPQ) under continuous-light conditions. Indirectly promotes efficient inorganic carbon uptake into chloroplasts. This chain is Potassium/proton antiporter CemA, found in Oryza nivara (Indian wild rice).